Here is a 350-residue protein sequence, read N- to C-terminus: 3-dehydroquinate synthase (350 aa).

NAD(+)-binding positions include aspartate 63–lysine 68, glycine 97–aspartate 101, threonine 121–threonine 122, lysine 134, lysine 143, and phenylalanine 161–threonine 164. Glutamate 176, histidine 235, and histidine 252 together coordinate Zn(2+).

This sequence belongs to the sugar phosphate cyclases superfamily. Dehydroquinate synthase family. Co(2+) is required as a cofactor. The cofactor is Zn(2+). Requires NAD(+) as cofactor.

Its subcellular location is the cytoplasm. The enzyme catalyses 7-phospho-2-dehydro-3-deoxy-D-arabino-heptonate = 3-dehydroquinate + phosphate. The protein operates within metabolic intermediate biosynthesis; chorismate biosynthesis; chorismate from D-erythrose 4-phosphate and phosphoenolpyruvate: step 2/7. Its function is as follows. Catalyzes the conversion of 3-deoxy-D-arabino-heptulosonate 7-phosphate (DAHP) to dehydroquinate (DHQ). The chain is 3-dehydroquinate synthase from Sulfurovum sp. (strain NBC37-1).